A 181-amino-acid chain; its full sequence is Lysozyme A (181 aa).

An N-terminal signal peptide occupies residues 1–19 (MRIAFFLLVLAVIIGFAYG). Residues 139–181 (LTDSRPLGPFNVTESEMAQLFIDHEIAMAQCEAEKTCNGFDLE) constitute a propeptide that is removed on maturation.

The protein belongs to the dictyostelium lysozyme family. In terms of processing, contains six disulfide bonds.

It localises to the cytoplasmic vesicle lumen. The enzyme catalyses Hydrolysis of 1,4-beta-linkages between N-acetylmuramic acid and N-acetyl-D-glucosamine residues in a peptidoglycan.. Its function is as follows. Has antibacterial activity against the Gram-positive bacteria B.subtilis, B.megaterium and M.luteus. No antibacterial activity detected against the Gram-positive bacterium S.aureus or against the Gram-negative bacterium E.coli. Lacks chitinase activity. In Dictyostelium discoideum (Social amoeba), this protein is Lysozyme A.